A 413-amino-acid chain; its full sequence is Phosphopentomutase (413 aa).

Positions 11, 306, 311, 347, 348, and 359 each coordinate Mn(2+).

Belongs to the phosphopentomutase family. Requires Mn(2+) as cofactor.

The protein localises to the cytoplasm. The catalysed reaction is 2-deoxy-alpha-D-ribose 1-phosphate = 2-deoxy-D-ribose 5-phosphate. It catalyses the reaction alpha-D-ribose 1-phosphate = D-ribose 5-phosphate. Its pathway is carbohydrate degradation; 2-deoxy-D-ribose 1-phosphate degradation; D-glyceraldehyde 3-phosphate and acetaldehyde from 2-deoxy-alpha-D-ribose 1-phosphate: step 1/2. Functionally, isomerase that catalyzes the conversion of deoxy-ribose 1-phosphate (dRib-1-P) and ribose 1-phosphate (Rib-1-P) to deoxy-ribose 5-phosphate (dRib-5-P) and ribose 5-phosphate (Rib-5-P), respectively. This is Phosphopentomutase from Helicobacter pylori (strain HPAG1).